We begin with the raw amino-acid sequence, 432 residues long: UDP-N-acetylmuramate--L-alanine ligase (432 aa).

Position 108–114 (108–114) interacts with ATP; that stretch reads GAHGKTS.

It belongs to the MurCDEF family.

The protein resides in the cytoplasm. It catalyses the reaction UDP-N-acetyl-alpha-D-muramate + L-alanine + ATP = UDP-N-acetyl-alpha-D-muramoyl-L-alanine + ADP + phosphate + H(+). Its pathway is cell wall biogenesis; peptidoglycan biosynthesis. Functionally, cell wall formation. The sequence is that of UDP-N-acetylmuramate--L-alanine ligase from Bacillus pumilus (strain SAFR-032).